Here is a 508-residue protein sequence, read N- to C-terminus: uncharacterized protein (508 aa).

The next 12 membrane-spanning stretches (helical) occupy residues 65 to 87 (IFPV…SYAV), 104 to 124 (WSGT…SLLL), 136 to 156 (FLVI…PGFI), 160 to 180 (VLLG…TAQW), 192 to 212 (VWVA…YGLA), 224 to 244 (LIFI…LAVV), 292 to 312 (TWIM…IGTF), 333 to 353 (LPAG…SLFI), 357 to 377 (MVLA…LSFA), 384 to 404 (LAGY…FAII), 416 to 436 (TVGV…PQTF), and 450 to 470 (TMVG…YVNW).

It belongs to the major facilitator superfamily. Allantoate permease family.

Its subcellular location is the endoplasmic reticulum. It localises to the golgi apparatus. The protein resides in the membrane. This is an uncharacterized protein from Schizosaccharomyces pombe (strain 972 / ATCC 24843) (Fission yeast).